The chain runs to 275 residues: Ribosomal RNA small subunit methyltransferase A (275 aa).

S-adenosyl-L-methionine contacts are provided by asparagine 21, leucine 23, glycine 48, glutamate 69, aspartate 94, and asparagine 115.

The protein belongs to the class I-like SAM-binding methyltransferase superfamily. rRNA adenine N(6)-methyltransferase family. RsmA subfamily.

The protein resides in the cytoplasm. It catalyses the reaction adenosine(1518)/adenosine(1519) in 16S rRNA + 4 S-adenosyl-L-methionine = N(6)-dimethyladenosine(1518)/N(6)-dimethyladenosine(1519) in 16S rRNA + 4 S-adenosyl-L-homocysteine + 4 H(+). Functionally, specifically dimethylates two adjacent adenosines (A1518 and A1519) in the loop of a conserved hairpin near the 3'-end of 16S rRNA in the 30S particle. May play a critical role in biogenesis of 30S subunits. This Clostridium botulinum (strain ATCC 19397 / Type A) protein is Ribosomal RNA small subunit methyltransferase A.